The chain runs to 284 residues: Extracellular metalloprotease VDBG_01143 (284 aa).

The signal sequence occupies residues 1–18 (MLFKSLFVAAATAVGVSG). The N-linked (GlcNAc...) asparagine glycan is linked to Asn-58. His-200 contacts Zn(2+). Glu-201 is a catalytic residue. His-204 provides a ligand contact to Zn(2+). Cysteines 236 and 263 form a disulfide.

It belongs to the peptidase M43B family.

Its subcellular location is the secreted. In terms of biological role, secreted metalloproteinase that allows assimilation of proteinaceous substrates. This is Extracellular metalloprotease VDBG_01143 from Verticillium alfalfae (strain VaMs.102 / ATCC MYA-4576 / FGSC 10136) (Verticillium wilt of alfalfa).